The chain runs to 159 residues: NADH-quinone oxidoreductase subunit B (159 aa).

4 residues coordinate [4Fe-4S] cluster: Cys-32, Cys-33, Cys-97, and Cys-126.

This sequence belongs to the complex I 20 kDa subunit family. In terms of assembly, NDH-1 is composed of 14 different subunits. Subunits NuoB, C, D, E, F, and G constitute the peripheral sector of the complex. It depends on [4Fe-4S] cluster as a cofactor.

It is found in the cell inner membrane. It catalyses the reaction a quinone + NADH + 5 H(+)(in) = a quinol + NAD(+) + 4 H(+)(out). In terms of biological role, NDH-1 shuttles electrons from NADH, via FMN and iron-sulfur (Fe-S) centers, to quinones in the respiratory chain. The immediate electron acceptor for the enzyme in this species is believed to be ubiquinone. Couples the redox reaction to proton translocation (for every two electrons transferred, four hydrogen ions are translocated across the cytoplasmic membrane), and thus conserves the redox energy in a proton gradient. In Helicobacter pylori (strain J99 / ATCC 700824) (Campylobacter pylori J99), this protein is NADH-quinone oxidoreductase subunit B.